We begin with the raw amino-acid sequence, 206 residues long: Sclerostin domain-containing protein 1 (206 aa).

The signal sequence occupies residues 1–22; it reads MLLSAIHFYGLLLACTFTRSYS. Residues 40-68 form a disordered region; it reads APASPSSNSTLNQARNGGRHYAGTGSDRN. The span at 43–54 shows a compositional bias: polar residues; the sequence is SPSSNSTLNQAR. Asn-47 carries an N-linked (GlcNAc...) asparagine glycan. Disulfide bonds link Cys-75–Cys-133, Cys-89–Cys-147, Cys-100–Cys-163, and Cys-104–Cys-165. The region spanning 75–170 is the CTCK domain; it reads CRELRSTKYI…TACKCKRYTR (96 aa). Asn-173 carries an N-linked (GlcNAc...) asparagine glycan. Positions 176–206 are disordered; the sequence is SHNFEGTSQAKPVQHHKERKRASKSSKHSTS. Over residues 188–206 the composition is skewed to basic residues; sequence VQHHKERKRASKSSKHSTS.

The protein belongs to the sclerostin family. In terms of assembly, interacts with LRP6.

The protein localises to the secreted. Can activate or inhibit Wnt signaling in a context-dependent manner. Activates the canonical Wnt pathway whereby acts through Disheveled proteins and beta-catenin. Antagonises Wnt signaling through the canonical pathways presumably by blocking accessibility of certain WNTs to their receptors. Induces posterior neural markers via components of the canonical Wnt pathway. The polypeptide is Sclerostin domain-containing protein 1 (SOSTDC1) (Gallus gallus (Chicken)).